A 194-amino-acid chain; its full sequence is Adenylate kinase (194 aa).

An ATP-binding site is contributed by 10–15; it reads GAGKGT. The interval 30-59 is NMP; it reads STGDMLRAAVAQQSEIGKRAKAVMDAGQLV. AMP contacts are provided by residues threonine 31, arginine 36, 57–59, 85–88, and glutamine 92; these read QLV and GYPR. The LID stretch occupies residues 126–142; it reads SRVAETIAKGGQVRSDD. Arginine 127 serves as a coordination point for ATP. Residues arginine 139 and arginine 150 each contribute to the AMP site. Alanine 178 is an ATP binding site.

Belongs to the adenylate kinase family. As to quaternary structure, monomer.

The protein resides in the cytoplasm. The catalysed reaction is AMP + ATP = 2 ADP. It participates in purine metabolism; AMP biosynthesis via salvage pathway; AMP from ADP: step 1/1. Functionally, catalyzes the reversible transfer of the terminal phosphate group between ATP and AMP. Plays an important role in cellular energy homeostasis and in adenine nucleotide metabolism. The sequence is that of Adenylate kinase from Brucella abortus (strain S19).